Consider the following 477-residue polypeptide: UDP-N-acetylmuramoylalanine--D-glutamate ligase (477 aa).

127–133 (GTNGKTT) serves as a coordination point for ATP.

It belongs to the MurCDEF family.

It localises to the cytoplasm. The catalysed reaction is UDP-N-acetyl-alpha-D-muramoyl-L-alanine + D-glutamate + ATP = UDP-N-acetyl-alpha-D-muramoyl-L-alanyl-D-glutamate + ADP + phosphate + H(+). Its pathway is cell wall biogenesis; peptidoglycan biosynthesis. Functionally, cell wall formation. Catalyzes the addition of glutamate to the nucleotide precursor UDP-N-acetylmuramoyl-L-alanine (UMA). The sequence is that of UDP-N-acetylmuramoylalanine--D-glutamate ligase from Prochlorococcus marinus (strain MIT 9515).